Reading from the N-terminus, the 283-residue chain is Polyamine aminopropyltransferase (283 aa).

The 234-residue stretch at 5-238 (TTWIDEYHKG…GIWSWTFASS (234 aa)) folds into the PABS domain. Glutamine 32 is an S-methyl-5'-thioadenosine binding site. Residues histidine 63 and aspartate 87 each contribute to the spermidine site. S-methyl-5'-thioadenosine contacts are provided by residues glutamate 107 and 139–140 (DG). Aspartate 158 functions as the Proton acceptor in the catalytic mechanism. A spermidine-binding site is contributed by 158 to 161 (DSSD).

This sequence belongs to the spermidine/spermine synthase family. Homodimer or homotetramer.

The protein resides in the cytoplasm. It catalyses the reaction S-adenosyl 3-(methylsulfanyl)propylamine + putrescine = S-methyl-5'-thioadenosine + spermidine + H(+). It participates in amine and polyamine biosynthesis; spermidine biosynthesis; spermidine from putrescine: step 1/1. Its function is as follows. Catalyzes the irreversible transfer of a propylamine group from the amino donor S-adenosylmethioninamine (decarboxy-AdoMet) to putrescine (1,4-diaminobutane) to yield spermidine. This Prochlorococcus marinus (strain MIT 9215) protein is Polyamine aminopropyltransferase.